The chain runs to 899 residues: UPF0182 protein Mhun_1303 (899 aa).

The next 7 membrane-spanning stretches (helical) occupy residues 6 to 26 (LLIFIPAAVILLFFLLTDLLS), 39 to 59 (VFLTILITSAALFVIGTLLFF), 93 to 113 (VAAGITGLSLSSSWEIILAFL), 136 to 156 (LPFYTILIQYLLALFVFTLII), 196 to 216 (FLPQVNCLLFLIFTTLAAFLW), 240 to 260 (ITIPALTILTVIAFLIGLLFL), and 271 to 291 (IAYGIGGFFIIAILSAGAGFL).

This sequence belongs to the UPF0182 family.

The protein localises to the cell membrane. This Methanospirillum hungatei JF-1 (strain ATCC 27890 / DSM 864 / NBRC 100397 / JF-1) protein is UPF0182 protein Mhun_1303.